We begin with the raw amino-acid sequence, 582 residues long: Zinc finger protein 614 (582 aa).

The KRAB domain maps to 8–79 (LTLEDVAVEF…VAKIQNKNCP (72 aa)). Residues 202–224 (HACIECEQTFLRKSQLIYHENIH) form a C2H2-type 1 zinc finger. Residues 254–278 (KICIPNEYRKGSTVNSRLIAHQQTH) form a C2H2-type 2; degenerate zinc finger. 10 C2H2-type zinc fingers span residues 284–306 (YMCSECGKGFTMKRYLIAHQRTH), 312–334 (YVCNECGKGFTVKSNLIVHQRTH), 340–362 (YICSECGKGFTMKRYLVVHQRTH), 368–390 (YICSECGKGFTVKSNLIVHQRSH), 396–418 (YICSECGKGFTVKRTLIIHQRTH), 424–446 (YICNECGKGFTTKRTLIIHQRTH), 452–474 (YECNECGKAFSQKICLIQHERCH), 480–502 (FVCTECGKSYSHKYGLITHQRIH), 508–530 (YECNECGKAFTTKSVLNVHQRTH), and 536–558 (YGCSDCEKAFSHLSNLVKHKKMH).

This sequence belongs to the krueppel C2H2-type zinc-finger protein family.

It is found in the nucleus. In terms of biological role, may be involved in transcriptional regulation. The chain is Zinc finger protein 614 (ZNF614) from Macaca fascicularis (Crab-eating macaque).